A 228-amino-acid polypeptide reads, in one-letter code: Large ribosomal subunit protein uL1 (228 aa).

It belongs to the universal ribosomal protein uL1 family. As to quaternary structure, part of the 50S ribosomal subunit.

Binds directly to 23S rRNA. The L1 stalk is quite mobile in the ribosome, and is involved in E site tRNA release. Its function is as follows. Protein L1 is also a translational repressor protein, it controls the translation of the L11 operon by binding to its mRNA. The polypeptide is Large ribosomal subunit protein uL1 (Clavibacter michiganensis subsp. michiganensis (strain NCPPB 382)).